A 56-amino-acid chain; its full sequence is Sex-specific storage protein 1 (56 aa).

This sequence belongs to the hemocyanin family. As to expression, expressed in fat body and ovary.

It is found in the secreted. Larval storage protein (LSP) which may serve as a store of amino acids for synthesis of adult proteins. The biosynthesis, accumulation and sequestration of storage protein-1 takes place during metamorphosis and saves energy for the non-feeding pupal stage. May also be essential for egg formation. The protein is Sex-specific storage protein 1 of Amsacta albistriga (Red hairy caterpillar).